Here is a 229-residue protein sequence, read N- to C-terminus: Prolactin (229 aa).

Residues 1–30 (MDNKGWSLKGSLLPLLLLVSDLLLCQGVTS) form the signal peptide. Residues Cys-34 and Cys-41 are joined by a disulfide bond. Residues Ser-56, Ser-64, and Ser-120 each carry the phosphoserine modification. 2 disulfides stabilise this stretch: Cys-88/Cys-204 and Cys-221/Cys-229.

Belongs to the somatotropin/prolactin family. As to quaternary structure, interacts with PRLR.

It is found in the secreted. Prolactin acts primarily on the mammary gland by promoting lactation. This Neovison vison (American mink) protein is Prolactin (PRL).